A 357-amino-acid chain; its full sequence is Alanine racemase (357 aa).

Lysine 33 functions as the Proton acceptor; specific for D-alanine in the catalytic mechanism. The residue at position 33 (lysine 33) is an N6-(pyridoxal phosphate)lysine. A substrate-binding site is contributed by arginine 129. The active-site Proton acceptor; specific for L-alanine is the tyrosine 253. Methionine 301 contributes to the substrate binding site.

The protein belongs to the alanine racemase family. In terms of assembly, homodimer. It depends on pyridoxal 5'-phosphate as a cofactor.

It catalyses the reaction L-alanine = D-alanine. It functions in the pathway amino-acid biosynthesis; D-alanine biosynthesis; D-alanine from L-alanine: step 1/1. Functionally, catalyzes the interconversion of L-alanine and D-alanine. Is highly specific for alanine as substrate. May serve both anabolic and catabolic purposes. This Pseudomonas taetrolens protein is Alanine racemase.